The primary structure comprises 398 residues: Lysophosphatidylserine lipase ABHD12 (398 aa).

Residues 1–15 (MRKRTEPVTLEHERC) are compositionally biased toward basic and acidic residues. The tract at residues 1 to 24 (MRKRTEPVTLEHERCAASGSSSSG) is disordered. The Cytoplasmic portion of the chain corresponds to 1-74 (MRKRTEPVTL…RKSLWFRLRK (74 aa)). Residues 75–95 (ILLCVLGFYIAIPFLVKLCPG) traverse the membrane as a helical segment. Residues 96–398 (IQAKLIFLNF…LGKSEPERQH (303 aa)) lie on the Extracellular side of the membrane. A glycan (N-linked (GlcNAc...) asparagine) is linked at Asn-123. The Nucleophile role is filled by Ser-246. Catalysis depends on charge relay system residues Asp-333 and His-372.

Belongs to the serine esterase family. Post-translationally, glycosylated.

The protein localises to the endoplasmic reticulum membrane. Its subcellular location is the mitochondrion. It catalyses the reaction 1-(9Z-octadecenoyl)-sn-glycero-3-phospho-L-serine + H2O = sn-glycero-3-phospho-L-serine + (9Z)-octadecenoate + H(+). It carries out the reaction 1-(9Z-octadecenoyl)-sn-glycero-3-phospho-(1'-sn-glycerol) + H2O = sn-glycero-3-phospho-(1'-sn-glycerol) + (9Z)-octadecenoate + H(+). The enzyme catalyses 1-(9Z-octadecenoyl)-sn-glycero-3-phospho-(1D-myo-inositol) + H2O = sn-glycero-3-phospho-1D-myo-inositol + (9Z)-octadecenoate + H(+). The catalysed reaction is 1-(9Z-octadecenoyl)-sn-glycero-3-phosphoethanolamine + H2O = sn-glycero-3-phosphoethanolamine + (9Z)-octadecenoate + H(+). It catalyses the reaction 1-(9Z-octadecenoyl)-sn-glycero-3-phosphocholine + H2O = 1-(9Z-octadecenoyl)-sn-glycerol + phosphocholine + H(+). It carries out the reaction 2-(9Z-octadecenoyl)-glycerol + H2O = glycerol + (9Z)-octadecenoate + H(+). The enzyme catalyses 1-hexadecanoyl-sn-glycero-3-phospho-L-serine + H2O = sn-glycero-3-phospho-L-serine + hexadecanoate + H(+). The catalysed reaction is 2-(5Z,8Z,11Z,14Z-eicosatetraenoyl)-glycerol + H2O = glycerol + (5Z,8Z,11Z,14Z)-eicosatetraenoate + H(+). It catalyses the reaction Hydrolyzes glycerol monoesters of long-chain fatty acids.. It carries out the reaction 1-decanoylglycerol + H2O = decanoate + glycerol + H(+). The enzyme catalyses 1-dodecanoylglycerol + H2O = dodecanoate + glycerol + H(+). The catalysed reaction is 1-tetradecanoylglycerol + H2O = tetradecanoate + glycerol + H(+). It catalyses the reaction 2-hexadecanoylglycerol + H2O = glycerol + hexadecanoate + H(+). It carries out the reaction 1-(9Z-octadecenoyl)-glycerol + H2O = glycerol + (9Z)-octadecenoate + H(+). The enzyme catalyses 2-(9Z,12Z-octadecadienoyl)-glycerol + H2O = (9Z,12Z)-octadecadienoate + glycerol + H(+). The catalysed reaction is 1-(5Z,8Z,11Z,14Z-eicosatetraenoyl)-glycerol + H2O = glycerol + (5Z,8Z,11Z,14Z)-eicosatetraenoate + H(+). It catalyses the reaction 1-(9Z,12Z-octadecadienoyl)-glycerol + H2O = (9Z,12Z)-octadecadienoate + glycerol + H(+). It carries out the reaction 1-hexadecanoylglycerol + H2O = glycerol + hexadecanoate + H(+). The enzyme catalyses 1-octadecanoylglycerol + H2O = octadecanoate + glycerol + H(+). The catalysed reaction is 1-octadecanoyl-2-(9,10-epoxyoctadecanoyl)-sn-glycero-3-phospho-L-serine + H2O = 9,10-epoxyoctadecanoate + 1-octadecanoyl-sn-glycero-3-phosphoserine + H(+). It catalyses the reaction 1-octadecanoyl-2-(10-hydroxyoctadecanoyl)-sn-glycero-3-phospho-L-serine + H2O = 1-octadecanoyl-sn-glycero-3-phosphoserine + 10-hydroxyoctadecanoate + H(+). It carries out the reaction 1-hexadecanoyl-2-(10-hydroxyoctadecanoyl)-sn-glycero-3-phospho-L-serine + H2O = 10-hydroxyoctadecanoate + 1-hexadecanoyl-sn-glycero-3-phospho-L-serine + H(+). Its activity is regulated as follows. Selectively inhibited by DO264 (N-3-pyridyl-N'-(1-[3-chloro-4-{2-chloro-4-(trifluoromethoxy)phenoxy}pyridine-2-yl]piperidin-4-yl)thiourea). Lysophosphatidylserine (LPS) lipase that mediates the hydrolysis of lysophosphatidylserine, a class of signaling lipids that regulates immunological and neurological processes. Represents a major lysophosphatidylserine lipase in the brain, thereby playing a key role in the central nervous system. Also able to hydrolyze oxidized phosphatidylserine; oxidized phosphatidylserine is produced in response to severe inflammatory stress and constitutes a proapoptotic 'eat me' signal. Also has monoacylglycerol (MAG) lipase activity: hydrolyzes 2-arachidonoylglycerol (2-AG), thereby acting as a regulator of endocannabinoid signaling pathways. Has a strong preference for very-long-chain lipid substrates; substrate specificity is likely due to improved catalysis and not improved substrate binding. The polypeptide is Lysophosphatidylserine lipase ABHD12 (Mus musculus (Mouse)).